The primary structure comprises 441 residues: MSLQSPKVGFVSLGCPKASSDSERILTQLRAEGYAISGSYDDADLVVVNTCGFIDSAVEESLDAIGEALAENGKVIVTGCLGAKSDVVKAAHPGVLAVTGPHALEEVMTAVHANLPKLHDPYTDLVPPQGIRLTPQHYAYLKISEGCNHRCSFCIIPSMRGDLVSRSIGDVMTEAENLVNAGVAELLVISQDTSAYGVDVKYRTGFWNGRPVKTRMTELARALGSLGVWVRMHYVYPYPHVDEIIPLMADGLILPYLDVPLQHASPRILKAMKRPASSENNLARINAWREICPDITIRSTFIVGFPGETDEDFECLLEFLQEAQLDRVGCFAYSAVDGAAANALDNPVPEPLKQERLARFMEVQESISAEKQRRKIGRIETVLIDDIDGDQAIGRTAADAPEIDGVVYLSGADGLQPGDLVEAQIVNSDGHDLWAAPPARD.

The MTTase N-terminal domain maps to 6–116 (PKVGFVSLGC…VMTAVHANLP (111 aa)). Residues Cys15, Cys51, Cys80, Cys147, Cys151, and Cys154 each contribute to the [4Fe-4S] cluster site. Positions 133 to 370 (LTPQHYAYLK…MEVQESISAE (238 aa)) constitute a Radical SAM core domain. Residues 373-439 (RRKIGRIETV…GHDLWAAPPA (67 aa)) enclose the TRAM domain.

It belongs to the methylthiotransferase family. RimO subfamily. [4Fe-4S] cluster serves as cofactor.

It is found in the cytoplasm. The enzyme catalyses L-aspartate(89)-[ribosomal protein uS12]-hydrogen + (sulfur carrier)-SH + AH2 + 2 S-adenosyl-L-methionine = 3-methylsulfanyl-L-aspartate(89)-[ribosomal protein uS12]-hydrogen + (sulfur carrier)-H + 5'-deoxyadenosine + L-methionine + A + S-adenosyl-L-homocysteine + 2 H(+). Its function is as follows. Catalyzes the methylthiolation of an aspartic acid residue of ribosomal protein uS12. The sequence is that of Ribosomal protein uS12 methylthiotransferase RimO from Methylobacillus flagellatus (strain ATCC 51484 / DSM 6875 / VKM B-1610 / KT).